The chain runs to 516 residues: 2-isopropylmalate synthase (516 aa).

The Pyruvate carboxyltransferase domain occupies 5–267; sequence IIIFDTTLRD…STDINIKEIH (263 aa). The Mn(2+) site is built by Asp14, His202, His204, and Asn238. The regulatory domain stretch occupies residues 393 to 516; it reads KLEYFDVQSK…VNKELERLQK (124 aa).

Belongs to the alpha-IPM synthase/homocitrate synthase family. LeuA type 1 subfamily. As to quaternary structure, homodimer. The cofactor is Mn(2+).

Its subcellular location is the cytoplasm. The catalysed reaction is 3-methyl-2-oxobutanoate + acetyl-CoA + H2O = (2S)-2-isopropylmalate + CoA + H(+). It participates in amino-acid biosynthesis; L-leucine biosynthesis; L-leucine from 3-methyl-2-oxobutanoate: step 1/4. Functionally, catalyzes the condensation of the acetyl group of acetyl-CoA with 3-methyl-2-oxobutanoate (2-ketoisovalerate) to form 3-carboxy-3-hydroxy-4-methylpentanoate (2-isopropylmalate). The protein is 2-isopropylmalate synthase of Buchnera aphidicola subsp. Cinara cedri (strain Cc).